The chain runs to 459 residues: tRNA uridine(34) acetyltransferase (459 aa).

The tract at residues 1 to 278 is radical S-adenosyl-L-methionine (rSAM); sequence MKKLSRTISG…VPPYVRISRV (278 aa). The Radical SAM core domain occupies 6–271; sequence RTISGVTPVA…IADIKALVPP (266 aa). Positions 23, 27, and 30 each coordinate [4Fe-4S] cluster. Residue lysine 77 participates in acetyl-CoA binding. The tract at residues 308-459 is N-acetyltransferase; that stretch reads QKCRCIRCRE…VAGYMCKHLD (152 aa). Zn(2+) is bound by residues cysteine 310, cysteine 312, and cysteine 315. Acetyl-CoA is bound by residues 386 to 389, 409 to 411, and tyrosine 442; these read ELHV and LGR.

The protein belongs to the ELP3 family. In terms of assembly, homodimer. [4Fe-4S] cluster serves as cofactor.

The catalysed reaction is uridine(34) in tRNA + acetyl-CoA + S-adenosyl-L-methionine + H2O = 5-(carboxymethyl)uridine(34) in tRNA + 5'-deoxyadenosine + L-methionine + CoA + 2 H(+). It participates in tRNA modification. In terms of biological role, tRNA uridine(34) acetyltransferase, which mediates formation of carboxymethyluridine in the wobble base at position 34 in tRNAs. The proposed mechanism is the following: (i) recruits S-adenosyl-L-methionine and cleaves it to generate a 5'-deoxyadenosine radical (5'-dA) in the radical S-adenosyl-L-methionine (rSAM) region, (ii) hydrolyzes acetyl-CoA in the N-acetyltransferase domain and (iii) an acetyl radical is formed by the products of the two domains and (iv) is transferred onto the C5 position of uridine(34) in the bound tRNA molecule. Does not show protein lysine acetyltransferase activity. The sequence is that of tRNA uridine(34) acetyltransferase from Dehalococcoides mccartyi (strain CBDB1).